The sequence spans 253 residues: Chitooligosaccharide deacetylase (253 aa).

The Mg(2+) site is built by H61 and H125.

It belongs to the YdjC deacetylase family. ChbG subfamily. As to quaternary structure, homodimer. Requires Mg(2+) as cofactor.

The protein resides in the cytoplasm. It carries out the reaction N,N'-diacetylchitobiose + H2O = N-acetyl-beta-D-glucosaminyl-(1-&gt;4)-D-glucosamine + acetate. The catalysed reaction is diacetylchitobiose-6'-phosphate + H2O = N'-monoacetylchitobiose-6'-phosphate + acetate. It functions in the pathway glycan degradation; chitin degradation. In terms of biological role, involved in the degradation of chitin. ChbG is essential for growth on the acetylated chitooligosaccharides chitobiose and chitotriose but is dispensable for growth on cellobiose and chitosan dimer, the deacetylated form of chitobiose. Deacetylation of chitobiose-6-P and chitotriose-6-P is necessary for both the activation of the chb promoter by the regulatory protein ChbR and the hydrolysis of phosphorylated beta-glucosides by the phospho-beta-glucosidase ChbF. Catalyzes the removal of only one acetyl group from chitobiose-6-P to yield monoacetylchitobiose-6-P, the inducer of ChbR and the substrate of ChbF. In Proteus mirabilis (strain HI4320), this protein is Chitooligosaccharide deacetylase.